Consider the following 273-residue polypeptide: Coiled-coil domain-containing protein 3 (273 aa).

The first 21 residues, 1 to 21 (MPLPLLLAALCLAASPAPARA), serve as a signal peptide directing secretion. Residue asparagine 100 is glycosylated (N-linked (GlcNAc...) asparagine). Residues 188–250 (SVQKALFEEE…VNQKLNEKLG (63 aa)) are a coiled coil.

As to quaternary structure, homodimer. N-glycosylated. Expressed in aorta and adipose tissue. Enriched in mature adipocytes. Over-expressed in adipose tissue from either hormonally-induced or nutritionally-regulated obese mice models.

The protein localises to the secreted. Negatively regulates TNF-alpha-induced pro-inflammatory response in endothelial cells (ECs) via inhibition of TNF-alpha-induced NF-kappaB activation in ECs. Positively regulates lipid accumulation in adipose cells. The protein is Coiled-coil domain-containing protein 3 (Ccdc3) of Mus musculus (Mouse).